Reading from the N-terminus, the 314-residue chain is Methionyl-tRNA formyltransferase (314 aa).

112 to 115 (SLLP) is a (6S)-5,6,7,8-tetrahydrofolate binding site.

It belongs to the Fmt family.

The enzyme catalyses L-methionyl-tRNA(fMet) + (6R)-10-formyltetrahydrofolate = N-formyl-L-methionyl-tRNA(fMet) + (6S)-5,6,7,8-tetrahydrofolate + H(+). Attaches a formyl group to the free amino group of methionyl-tRNA(fMet). The formyl group appears to play a dual role in the initiator identity of N-formylmethionyl-tRNA by promoting its recognition by IF2 and preventing the misappropriation of this tRNA by the elongation apparatus. The polypeptide is Methionyl-tRNA formyltransferase (Buchnera aphidicola subsp. Schizaphis graminum (strain Sg)).